Here is a 184-residue protein sequence, read N- to C-terminus: UPF0398 protein BAA_1648 (184 aa).

It belongs to the UPF0398 family.

The sequence is that of UPF0398 protein BAA_1648 from Bacillus anthracis (strain A0248).